A 227-amino-acid polypeptide reads, in one-letter code: Small ribosomal subunit protein uS3 (227 aa).

The region spanning valine 39 to arginine 107 is the KH type-2 domain.

It belongs to the universal ribosomal protein uS3 family. As to quaternary structure, part of the 30S ribosomal subunit. Forms a tight complex with proteins S10 and S14.

Functionally, binds the lower part of the 30S subunit head. Binds mRNA in the 70S ribosome, positioning it for translation. In Hahella chejuensis (strain KCTC 2396), this protein is Small ribosomal subunit protein uS3.